Consider the following 365-residue polypeptide: Histidinol-phosphate aminotransferase 2 (365 aa).

Position 221 is an N6-(pyridoxal phosphate)lysine (lysine 221).

The protein belongs to the class-II pyridoxal-phosphate-dependent aminotransferase family. Histidinol-phosphate aminotransferase subfamily. In terms of assembly, homodimer. Pyridoxal 5'-phosphate is required as a cofactor.

The enzyme catalyses L-histidinol phosphate + 2-oxoglutarate = 3-(imidazol-4-yl)-2-oxopropyl phosphate + L-glutamate. It participates in amino-acid biosynthesis; L-histidine biosynthesis; L-histidine from 5-phospho-alpha-D-ribose 1-diphosphate: step 7/9. This Bradyrhizobium diazoefficiens (strain JCM 10833 / BCRC 13528 / IAM 13628 / NBRC 14792 / USDA 110) protein is Histidinol-phosphate aminotransferase 2 (hisC2).